We begin with the raw amino-acid sequence, 1589 residues long: Sterile alpha motif domain-containing protein 9 (1589 aa).

Residues 14 to 78 enclose the SAM domain; it reads WTKEDVNQWL…ELFKELRKTA (65 aa). The tract at residues 83–135 is disordered; sequence IQTSKMGKPSKNAPKDQTVSQKERRETSKQKQKGKENPDMANPSAMSTTAKGS. Positions 103–120 are enriched in basic and acidic residues; the sequence is QKERRETSKQKQKGKENP.

Interacts with RGL2. Interacts with EEA1. As to quaternary structure, (Microbial infection) Interacts with myxoma virus protein M062. In terms of tissue distribution, widely expressed. Very low levels are detected in skeletal muscle. Not detected in brain. Down-regulated in aggressive fibromatosis, as well as in breast and colon cancers. Up-regulated in fibroblasts from patients with normophosphatemic tumoral calcinosis (NFTC).

The protein localises to the cytoplasm. In terms of biological role, double-stranded nucleic acid binding that acts as an antiviral factor by playing an essential role in the formation of cytoplasmic antiviral granules. May play a role in the inflammatory response to tissue injury and the control of extra-osseous calcification, acting as a downstream target of TNF-alpha signaling. Involved in the regulation of EGR1, in coordination with RGL2. May be involved in endosome fusion. The chain is Sterile alpha motif domain-containing protein 9 (SAMD9) from Homo sapiens (Human).